A 407-amino-acid polypeptide reads, in one-letter code: Inactive non-canonical poly(A) RNA polymerase protein Trf4-2 (407 aa).

Asp85 and Asp87 together coordinate Mg(2+). The PAP-associated domain occupies 221–280 (LALLLIQFLDYYGRKFDFFKYGISVLGQGGCVEKARLRSTLGENNWQSVLCIEDPVTPTN). Residues 354-390 (LVQPSPTGSTSPSASASASEDERSGGPATIGFGRCDD) are disordered. Residues 357–371 (PSPTGSTSPSASASA) show a composition bias toward low complexity.

This sequence belongs to the DNA polymerase type-B-like family.

This Drosophila melanogaster (Fruit fly) protein is Inactive non-canonical poly(A) RNA polymerase protein Trf4-2.